Consider the following 296-residue polypeptide: Ribosomal protein L11 methyltransferase (296 aa).

S-adenosyl-L-methionine contacts are provided by threonine 145, glycine 166, aspartate 188, and asparagine 230.

This sequence belongs to the methyltransferase superfamily. PrmA family.

It localises to the cytoplasm. It catalyses the reaction L-lysyl-[protein] + 3 S-adenosyl-L-methionine = N(6),N(6),N(6)-trimethyl-L-lysyl-[protein] + 3 S-adenosyl-L-homocysteine + 3 H(+). Functionally, methylates ribosomal protein L11. The polypeptide is Ribosomal protein L11 methyltransferase (Photorhabdus laumondii subsp. laumondii (strain DSM 15139 / CIP 105565 / TT01) (Photorhabdus luminescens subsp. laumondii)).